A 285-amino-acid chain; its full sequence is GTP cyclohydrolase 1 type 2 homolog (285 aa).

Residues His-65, His-66, Asp-104, His-230, and Glu-234 each coordinate a divalent metal cation.

It belongs to the GTP cyclohydrolase I type 2/NIF3 family. Homohexamer.

The sequence is that of GTP cyclohydrolase 1 type 2 homolog from Streptomyces coelicolor (strain ATCC BAA-471 / A3(2) / M145).